We begin with the raw amino-acid sequence, 539 residues long: F-box only protein 31 (539 aa).

The disordered stretch occupies residues 11–53 (GPSRGCRRRQQRRGPAETAAADSEPDTDPEEERIEASAGVGGG). Ser33 is modified (phosphoserine). Position 33 is a phosphoserine; by PKB/AKT1 (Ser33). The segment covering 33–43 (SEPDTDPEEER) has biased composition (acidic residues). Thr37 bears the Phosphothreonine mark. A D box motif is present at residues 64–69 (RCSLLE). In terms of domain architecture, F-box spans 64–110 (RCSLLELPPELLVEIFASLPGTDLPSLAQVCTKFRRILHTDTIWRRR). Cys206, His214, Cys230, and His236 together coordinate Zn(2+). Phosphoserine; by ATM is present on Ser278. The short motif at 297 to 299 (DDL) is the DDL motif element. Over residues 377–397 (VRQEQQEGGHEAGEGRGRQGP) the composition is skewed to basic and acidic residues. Residues 377–446 (VRQEQQEGGH…PAQCGQGQPF (70 aa)) form a disordered region. Position 419 is a phosphothreonine; by MTOR (Thr419). Ser480 is subject to Phosphoserine.

It belongs to the FBXO31 family. As to quaternary structure, part of a SCF (SKP1-cullin-F-box) protein ligase complex SCF(FBXO31) composed of CUL1, SKP1, RBX1 and FBXO31. Interacts (when phosphorylated at Ser-33) with CDC20, promoting ubiquitination by the APC/C complex. In terms of processing, phosphorylation at Ser-278 by ATM following gamma-irradiation results in its stabilization. Phosphorylation at Thr-419 and Ser-480 in absence of stress promotes its ubiquitination and degradation by the SCF(FBXO46) complex. Phosphorylation at Ser-33 by AKT1 promotes association with CDC20 and ubiquitination by the APC/C complex. Ubiquitinated by the SCF(FBXO46) complex in absence of stress, promoting its degradation. Ubiquitinated by the APC/C complex following phosphorylation at Ser-33, leading to its degradation by the proteasome. As to expression, highly expressed in brain. Expressed at moderate levels in most tissues, except bone marrow.

It is found in the cytoplasm. The protein resides in the cytoskeleton. Its subcellular location is the microtubule organizing center. It localises to the centrosome. Its pathway is protein modification; protein ubiquitination. In terms of biological role, substrate-recognition component of the SCF(FBXO31) protein ligase complex, which specifically mediates the ubiquitination of proteins amidated at their C-terminus in response to oxidative stress, leading to their degradation by the proteasome. FBXO31 specifically recognizes and binds C-terminal peptides bearing an amide: C-terminal amidation in response to oxidative stress takes place following protein fragmentation. The SCF(FBXO31) also plays a role in G1 arrest following DNA damage by mediating ubiquitination of phosphorylated cyclin-D1 (CCND1), promoting its degradation by the proteasome, resulting in G1 arrest. The SCF(FBXO31) complex is however not a major regulator of CCND1 stability during the G1/S transition. In response to genotoxic stress, the SCF(FBXO31) complex directs ubiquitination and degradation of phosphorylated MDM2, thereby promoting p53/TP53-mediated DNA damage response. SCF(FBXO31) complex is required for genomic integrity by catalyzing ubiquitination and degradation of cyclin-A (CCNA1 and/or CCNA2) during the G1 phase. In response to genotoxic stress, the SCF(FBXO31) complex directs ubiquitination and degradation of phosphorylated FBXO46 and MAP2K6. SCF(FBXO31) complex promotes ubiquitination and degradation of CDT1 during the G2 phase to prevent re-replication. The SCF(FBXO31) complex also mediates ubiquitination and degradation of DUSP6, OGT and PARD6A. This chain is F-box only protein 31, found in Homo sapiens (Human).